The chain runs to 350 residues: MSNPSLVRSNWTRKEVEALFALPFNDLLFEAQTIHRQFFNANEVQVSTLCSIKTGACPEDCAYCPQSARYDTGLEREKLMAVEKVLEEAKAAKDSGATRFCMGAAWRSPKKKDMPYVTAMVKGVKEMGLEACMTLGMIDKDQATELAEAGLDYYNHNLDTSPEYYGDIITTRTYQDRLDTLDNVRHAGMKVCCGGIMGMGEDESDRVGLLLQLANMPQHPESVPINMLVAVEGTPLEQQEALDPFDFIRTIAVARILMPQSHVRLSAGREDMNDQTQALAFHAGANSIFYGEKLLTTANPESNKDMQLFKRLGINPEKREEHKTEQEQVEQINQQVAEAALDKVFYNAAS.

The region spanning 42–269 (NEVQVSTLCS…QSHVRLSAGR (228 aa)) is the Radical SAM core domain. [4Fe-4S] cluster is bound by residues Cys-57, Cys-61, and Cys-64. Residues Cys-101, Cys-132, Cys-192, and Arg-264 each coordinate [2Fe-2S] cluster.

Belongs to the radical SAM superfamily. Biotin synthase family. Homodimer. Requires [4Fe-4S] cluster as cofactor. [2Fe-2S] cluster serves as cofactor.

The catalysed reaction is (4R,5S)-dethiobiotin + (sulfur carrier)-SH + 2 reduced [2Fe-2S]-[ferredoxin] + 2 S-adenosyl-L-methionine = (sulfur carrier)-H + biotin + 2 5'-deoxyadenosine + 2 L-methionine + 2 oxidized [2Fe-2S]-[ferredoxin]. Its pathway is cofactor biosynthesis; biotin biosynthesis; biotin from 7,8-diaminononanoate: step 2/2. Catalyzes the conversion of dethiobiotin (DTB) to biotin by the insertion of a sulfur atom into dethiobiotin via a radical-based mechanism. This is Biotin synthase from Saccharophagus degradans (strain 2-40 / ATCC 43961 / DSM 17024).